Consider the following 136-residue polypeptide: Transmembrane protein 203 (136 aa).

An interaction with STING1 region spans residues 1–51 (MLFSLRELVQWLGFATFEIFVHLLALLVFSVLLALRVDGLTPGLSWWNVFV). A run of 4 helical transmembrane segments spans residues 14 to 34 (FATF…VLLA), 50 to 72 (FVPF…VRLF), 81 to 101 (VLRL…EMLL), and 112 to 132 (LWFG…MIRA). The tract at residues 52–136 (PFFAADGLST…LLMIRACRVN (85 aa)) is required for lysosomal localization of the STING-TMEM203 complex.

As to quaternary structure, homodimer. Interacts with ATP2A2 and ITPR3. Interacts with STIM1 and STING1 (via transmembrane domain).

It localises to the endoplasmic reticulum membrane. It is found in the endoplasmic reticulum-Golgi intermediate compartment. The protein resides in the lysosome membrane. In terms of biological role, involved in the regulation of cellular calcium homeotasis. Required for spermatogenesis. Acts as a regulator of STING-mediated inflammatory signaling in macrophages. Forms a complex with STING, promoting the activity of TBK1 kinase and the transcription factor IRF3, leading to activation of type I interferon expression. The chain is Transmembrane protein 203 (Tmem203) from Mus musculus (Mouse).